We begin with the raw amino-acid sequence, 79 residues long: MTRKNIDLIEMEGVVTQCLSNGMFRVKLENGFLVLAHVSGKIRRNSIRILLGDRVAVELSPYDLHRGRITFRLRPGSKT.

One can recognise an S1-like domain in the interval 1-74; that stretch reads MTRKNIDLIE…HRGRITFRLR (74 aa).

Belongs to the IF-1 family. As to quaternary structure, component of the 30S ribosomal translation pre-initiation complex which assembles on the 30S ribosome in the order IF-2 and IF-3, IF-1 and N-formylmethionyl-tRNA(fMet); mRNA recruitment can occur at any time during PIC assembly.

It is found in the plastid. Its subcellular location is the chloroplast. Functionally, one of the essential components for the initiation of protein synthesis. Stabilizes the binding of IF-2 and IF-3 on the 30S subunit to which N-formylmethionyl-tRNA(fMet) subsequently binds. Helps modulate mRNA selection, yielding the 30S pre-initiation complex (PIC). Upon addition of the 50S ribosomal subunit IF-1, IF-2 and IF-3 are released leaving the mature 70S translation initiation complex. This chain is Translation initiation factor IF-1, chloroplastic, found in Chlorella vulgaris (Green alga).